Consider the following 388-residue polypeptide: Succinate--CoA ligase [ADP-forming] subunit beta (388 aa).

One can recognise an ATP-grasp domain in the interval 9–244 (KEILRKFGVA…LDEEDPAEIE (236 aa)). ATP-binding positions include lysine 46, 53 to 55 (GRG), glutamate 99, alanine 102, and glutamate 107. Asparagine 199 and aspartate 213 together coordinate Mg(2+). Substrate is bound by residues asparagine 264 and 321 to 323 (GIM).

Belongs to the succinate/malate CoA ligase beta subunit family. As to quaternary structure, heterotetramer of two alpha and two beta subunits. Mg(2+) serves as cofactor.

It carries out the reaction succinate + ATP + CoA = succinyl-CoA + ADP + phosphate. The catalysed reaction is GTP + succinate + CoA = succinyl-CoA + GDP + phosphate. The protein operates within carbohydrate metabolism; tricarboxylic acid cycle; succinate from succinyl-CoA (ligase route): step 1/1. Its function is as follows. Succinyl-CoA synthetase functions in the citric acid cycle (TCA), coupling the hydrolysis of succinyl-CoA to the synthesis of either ATP or GTP and thus represents the only step of substrate-level phosphorylation in the TCA. The beta subunit provides nucleotide specificity of the enzyme and binds the substrate succinate, while the binding sites for coenzyme A and phosphate are found in the alpha subunit. The protein is Succinate--CoA ligase [ADP-forming] subunit beta of Burkholderia vietnamiensis (strain G4 / LMG 22486) (Burkholderia cepacia (strain R1808)).